A 147-amino-acid polypeptide reads, in one-letter code: Molybdopterin synthase catalytic subunit 1 (147 aa).

Substrate-binding positions include 43-45, 109-110, Lys-125, and 132-134; these read NVR, HR, and KKE.

The protein belongs to the MoaE family. Heterotetramer of 2 MoaD subunits and 2 MoaE subunits. Also stable as homodimer. The enzyme changes between these two forms during catalysis.

The catalysed reaction is 2 [molybdopterin-synthase sulfur-carrier protein]-C-terminal-Gly-aminoethanethioate + cyclic pyranopterin phosphate + H2O = molybdopterin + 2 [molybdopterin-synthase sulfur-carrier protein]-C-terminal Gly-Gly + 2 H(+). The protein operates within cofactor biosynthesis; molybdopterin biosynthesis. Converts molybdopterin precursor Z into molybdopterin. This requires the incorporation of two sulfur atoms into precursor Z to generate a dithiolene group. The sulfur is provided by MoaD. The sequence is that of Molybdopterin synthase catalytic subunit 1 (moaE1) from Mycobacterium tuberculosis (strain ATCC 25618 / H37Rv).